The chain runs to 474 residues: tRNA-2-methylthio-N(6)-dimethylallyladenosine synthase (474 aa).

The region spanning 3-120 is the MTTase N-terminal domain; it reads KKLHIKTWGC…LPEMIDQIEA (118 aa). The [4Fe-4S] cluster site is built by cysteine 12, cysteine 49, cysteine 83, cysteine 157, cysteine 161, and cysteine 164. The region spanning 143 to 375 is the Radical SAM core domain; the sequence is RADGPSAFVS…QDRITQQAMR (233 aa). The region spanning 378–441 is the TRAM domain; it reads RQMLGTVQRI…TNSLRGNFIR (64 aa).

Belongs to the methylthiotransferase family. MiaB subfamily. As to quaternary structure, monomer. The cofactor is [4Fe-4S] cluster.

The protein resides in the cytoplasm. The catalysed reaction is N(6)-dimethylallyladenosine(37) in tRNA + (sulfur carrier)-SH + AH2 + 2 S-adenosyl-L-methionine = 2-methylsulfanyl-N(6)-dimethylallyladenosine(37) in tRNA + (sulfur carrier)-H + 5'-deoxyadenosine + L-methionine + A + S-adenosyl-L-homocysteine + 2 H(+). Functionally, catalyzes the methylthiolation of N6-(dimethylallyl)adenosine (i(6)A), leading to the formation of 2-methylthio-N6-(dimethylallyl)adenosine (ms(2)i(6)A) at position 37 in tRNAs that read codons beginning with uridine. The chain is tRNA-2-methylthio-N(6)-dimethylallyladenosine synthase from Shewanella woodyi (strain ATCC 51908 / MS32).